Consider the following 84-residue polypeptide: Defensin-like protein 172 (84 aa).

The first 23 residues, 1 to 23 (MAKASSTLVLSIIFLVMFALVEQ), serve as a signal peptide directing secretion. Disulfide bonds link C27-C74, C34-C56, C40-C68, and C44-C70.

It belongs to the DEFL family.

Its subcellular location is the secreted. The chain is Defensin-like protein 172 (LCR60) from Arabidopsis thaliana (Mouse-ear cress).